We begin with the raw amino-acid sequence, 688 residues long: Potassium-transporting ATPase ATP-binding subunit (688 aa).

Helical transmembrane passes span 35 to 55 (VMFV…QALG), 62 to 82 (AGFI…ANFA), 219 to 239 (IALT…IVTL), and 260 to 280 (VLIA…LSAI). The active-site 4-aspartylphosphate intermediate is aspartate 313. Residues aspartate 350, glutamate 354, 383–390 (FSAHTRMS), and lysine 401 each bind ATP. Mg(2+)-binding residues include aspartate 524 and aspartate 528. Transmembrane regions (helical) follow at residues 594–614 (FAII…LNVM), 622–642 (AILS…PLAL), and 668–688 (VIVP…VGLA).

The protein belongs to the cation transport ATPase (P-type) (TC 3.A.3) family. Type IA subfamily. In terms of assembly, the system is composed of three essential subunits: KdpA, KdpB and KdpC.

It localises to the cell inner membrane. The enzyme catalyses K(+)(out) + ATP + H2O = K(+)(in) + ADP + phosphate + H(+). In terms of biological role, part of the high-affinity ATP-driven potassium transport (or Kdp) system, which catalyzes the hydrolysis of ATP coupled with the electrogenic transport of potassium into the cytoplasm. This subunit is responsible for energy coupling to the transport system and for the release of the potassium ions to the cytoplasm. This is Potassium-transporting ATPase ATP-binding subunit from Dechloromonas aromatica (strain RCB).